Consider the following 123-residue polypeptide: Large ribosomal subunit protein bL12 (123 aa).

The protein belongs to the bacterial ribosomal protein bL12 family. As to quaternary structure, homodimer. Part of the ribosomal stalk of the 50S ribosomal subunit. Forms a multimeric L10(L12)X complex, where L10 forms an elongated spine to which 2 to 4 L12 dimers bind in a sequential fashion. Binds GTP-bound translation factors.

Functionally, forms part of the ribosomal stalk which helps the ribosome interact with GTP-bound translation factors. Is thus essential for accurate translation. This is Large ribosomal subunit protein bL12 from Metamycoplasma arthritidis (strain 158L3-1) (Mycoplasma arthritidis).